Consider the following 887-residue polypeptide: MAEDRIKSKLRRPASIESTMSSRTKPRHKPSPMSILMPHLMVGESFRKYRPHGLRNIRMNGHLDWNQLRKSFEKQSTFHGISHAATADGKWRWFWYTAFTICLLALLIQIFFLISKYRQYGKTVDLDLKFENAPFPSITICNLNPYKKSAIQSNPNTKAMMEAYSRRIGSGDKTEGIAAALSATGGLHAKVRRAKRKAKGKPRLRDRRYHQAFAQCLCDIEQLTGDRKGSCFAAFKGKIEIDTNNTAGFMNLHTSRCLCQLDTVSKALWPCFPYSSWKEKLCSECVDNTGHCPMRFYKGNELYENIKEQVDLCLCHKEYNHCVSTRDDGIILEISPNDELNDLDIGKKIASQLSAQQEKQAEVTTTEAPTVTQALGFEELTDDIAITSQAQENLMFAVGEMSEKAKESMSYELDELVLKCSFNQKDCQMDRDFTLHYDNTFGNCYTFNYNRTAEVASHRAGANYGLRVLLYANVSEYLPTTEAVGFRITVHDKHIVPFPDAFGYSAPTGFMSSFGVRMKQFIRLEPPYGHCRHGGEDAATFVYTGFQYSVEACHRSCAQKVIVEACGCADPMYPVAEMFGNNTKPCQAVNMDQRECLRNTTLWLGELYSKGKEAIIPDCYCHQPCQETNYEVTYSSARWPSGSAKVMECLPGDFLCLEKYRKNAAMVQIFYEELNYETMQESPAYTLTSVLADLGGLTGLWIGASVVSLLEIVTLIVFATQAYVRKRKGSISAQSHHSVPVHRASRVSLNTLHKSSTTQSVKLSVMDIRSIKSIHSNHSSKSKQSILIEDLPPAIQEQSDDEEETTESSRTNGSCRYLAPGEDLPCLCKYHPDGSIRIMKALCPVHGYMVRRNYDYSVSNSEEEDAEDEVHREPEPFYSAPYEHRKK.

The disordered stretch occupies residues 1–33 (MAEDRIKSKLRRPASIESTMSSRTKPRHKPSPM). At 1–93 (MAEDRIKSKL…AATADGKWRW (93 aa)) the chain is on the cytoplasmic side. The helical transmembrane segment at 94–114 (FWYTAFTICLLALLIQIFFLI) threads the bilayer. Residues 115-698 (SKYRQYGKTV…SVLADLGGLT (584 aa)) are Extracellular-facing. N-linked (GlcNAc...) asparagine glycans are attached at residues Asn-244, Asn-450, Asn-473, Asn-581, and Asn-599. Residues 699 to 719 (GLWIGASVVSLLEIVTLIVFA) form a helical membrane-spanning segment. Over 720–887 (TQAYVRKRKG…YSAPYEHRKK (168 aa)) the chain is Cytoplasmic. Disordered regions lie at residues 794-815 (AIQEQSDDEEETTESSRTNGSC) and 859-887 (SNSEEEDAEDEVHREPEPFYSAPYEHRKK).

Belongs to the amiloride-sensitive sodium channel (TC 1.A.6) family. Expressed in body wall muscle.

The protein localises to the membrane. Ion channel which is permeable to small monovalent cations. Shown not to be H+-ion gated. May be mechanosensitive and is required for growth and muscle development. The chain is Degenerin-like protein unc-105 (unc-105) from Caenorhabditis elegans.